The primary structure comprises 954 residues: Isoleucine--tRNA ligase (954 aa).

Residues 60–70 (PYANGALHMGH) carry the 'HIGH' region motif. Glu-564 contacts L-isoleucyl-5'-AMP. The 'KMSKS' region motif lies at 605–609 (KMSKS). Residue Lys-608 participates in ATP binding. Positions 923, 926, 943, and 946 each coordinate Zn(2+).

This sequence belongs to the class-I aminoacyl-tRNA synthetase family. IleS type 1 subfamily. Monomer. Requires Zn(2+) as cofactor.

The protein resides in the cytoplasm. The catalysed reaction is tRNA(Ile) + L-isoleucine + ATP = L-isoleucyl-tRNA(Ile) + AMP + diphosphate. Its function is as follows. Catalyzes the attachment of isoleucine to tRNA(Ile). As IleRS can inadvertently accommodate and process structurally similar amino acids such as valine, to avoid such errors it has two additional distinct tRNA(Ile)-dependent editing activities. One activity is designated as 'pretransfer' editing and involves the hydrolysis of activated Val-AMP. The other activity is designated 'posttransfer' editing and involves deacylation of mischarged Val-tRNA(Ile). The protein is Isoleucine--tRNA ligase of Synechococcus sp. (strain ATCC 27144 / PCC 6301 / SAUG 1402/1) (Anacystis nidulans).